The chain runs to 40 residues: Large ribosomal subunit protein bL36B (40 aa).

Belongs to the bacterial ribosomal protein bL36 family.

The chain is Large ribosomal subunit protein bL36B from Kocuria rhizophila (strain ATCC 9341 / DSM 348 / NBRC 103217 / DC2201).